The sequence spans 475 residues: Bifunctional protein HldE (475 aa).

Positions 1–318 (MKITLPEFGK…ANALYTEQET (318 aa)) are ribokinase. 195 to 198 (NMSE) provides a ligand contact to ATP. The active site involves Asp-264. Positions 344–475 (MTNGCFDILH…DIIKTIRERG (132 aa)) are cytidylyltransferase.

In the N-terminal section; belongs to the carbohydrate kinase PfkB family. It in the C-terminal section; belongs to the cytidylyltransferase family. As to quaternary structure, homodimer.

It carries out the reaction D-glycero-beta-D-manno-heptose 7-phosphate + ATP = D-glycero-beta-D-manno-heptose 1,7-bisphosphate + ADP + H(+). The enzyme catalyses D-glycero-beta-D-manno-heptose 1-phosphate + ATP + H(+) = ADP-D-glycero-beta-D-manno-heptose + diphosphate. It functions in the pathway nucleotide-sugar biosynthesis; ADP-L-glycero-beta-D-manno-heptose biosynthesis; ADP-L-glycero-beta-D-manno-heptose from D-glycero-beta-D-manno-heptose 7-phosphate: step 1/4. It participates in nucleotide-sugar biosynthesis; ADP-L-glycero-beta-D-manno-heptose biosynthesis; ADP-L-glycero-beta-D-manno-heptose from D-glycero-beta-D-manno-heptose 7-phosphate: step 3/4. Its function is as follows. Catalyzes the phosphorylation of D-glycero-D-manno-heptose 7-phosphate at the C-1 position to selectively form D-glycero-beta-D-manno-heptose-1,7-bisphosphate. Catalyzes the ADP transfer from ATP to D-glycero-beta-D-manno-heptose 1-phosphate, yielding ADP-D-glycero-beta-D-manno-heptose. This is Bifunctional protein HldE from Aeromonas salmonicida (strain A449).